The sequence spans 198 residues: 3-isopropylmalate dehydratase small subunit (198 aa).

The protein belongs to the LeuD family. LeuD type 1 subfamily. Heterodimer of LeuC and LeuD.

The enzyme catalyses (2R,3S)-3-isopropylmalate = (2S)-2-isopropylmalate. Its pathway is amino-acid biosynthesis; L-leucine biosynthesis; L-leucine from 3-methyl-2-oxobutanoate: step 2/4. Catalyzes the isomerization between 2-isopropylmalate and 3-isopropylmalate, via the formation of 2-isopropylmaleate. In Colwellia psychrerythraea (strain 34H / ATCC BAA-681) (Vibrio psychroerythus), this protein is 3-isopropylmalate dehydratase small subunit.